The sequence spans 123 residues: Double-stranded DNA deaminase immunity protein (123 aa).

The toxic domain forms a 1:1 complex with the DddI immunity protein. This protein blocks the active site of the toxin.

Immunity protein component of a toxin-immunity protein module, which functions as a cellular contact-dependent growth inhibition (CDI) system. CDI modules allow bacteria to communicate with and inhibit the growth of closely related neighboring bacteria in a contact-dependent fashion. Bacteria that have this module inhibit or kill bacteria without it, giving them a growth advantage. Specifically inhibits the toxic activity of cognate toxin DddA (C-terminal 163 residue fragment) upon expression in E.coli. This is Double-stranded DNA deaminase immunity protein from Burkholderia cenocepacia (strain H111).